The following is a 34-amino-acid chain: Omega/M-ectatotoxin-Et1a subunit B (34 aa).

Cysteines 10 and 32 form a disulfide.

It belongs to the ectatomin family. Ectatomin-Et subfamily. In terms of assembly, heterodimer of an A and a B chain; disulfide-linked. In terms of tissue distribution, expressed by the venom gland.

The protein localises to the secreted. It is found in the target cell membrane. In terms of biological role, algogenic for animals, human and insects. At high concentrations (0.5-1 uM), it acts as a pore-forming protein that forms nonselective cation channels both in cell and artificial membranes. It is weakly selective for cation over anions channel conductance is identical in both directions. At lower concentrations (1-10 nM), this heterodimer inhibits cardiac L-type calcium currents in isolated rat cardiac ventricular myocytes. This Ectatomma tuberculatum (Selva ant) protein is Omega/M-ectatotoxin-Et1a subunit B.